A 131-amino-acid polypeptide reads, in one-letter code: MITDPISDMLTRIRNAIKVKADKVDIPASRMKIEISKILKEEGFIKSYKIIKDKKQGIIRINLKYTSEGDSVISNLQRISKPGRRVYVSKDEIPHVMGGLGVAILTTSQGVMTDKECRHKGVGGEVICYIW.

The protein belongs to the universal ribosomal protein uS8 family. As to quaternary structure, part of the 30S ribosomal subunit. Contacts proteins S5 and S12.

Its function is as follows. One of the primary rRNA binding proteins, it binds directly to 16S rRNA central domain where it helps coordinate assembly of the platform of the 30S subunit. This is Small ribosomal subunit protein uS8 from Thermodesulfovibrio yellowstonii (strain ATCC 51303 / DSM 11347 / YP87).